The sequence spans 43 residues: Protein PsbN (43 aa).

Residues 4 to 24 traverse the membrane as a helical segment; sequence ATVLSITFAVILIAITGLAVY.

This sequence belongs to the PsbN family.

It localises to the cellular thylakoid membrane. May play a role in photosystem I and II biogenesis. The polypeptide is Protein PsbN (Synechocystis sp. (strain ATCC 27184 / PCC 6803 / Kazusa)).